A 339-amino-acid polypeptide reads, in one-letter code: Glycerol-3-phosphate dehydrogenase [NAD(P)+] (339 aa).

Positions 14, 15, 35, and 109 each coordinate NADPH. Sn-glycerol 3-phosphate contacts are provided by Lys109, Gly138, and Thr140. Ala142 contacts NADPH. The sn-glycerol 3-phosphate site is built by Lys194, Asp247, Ser257, Arg258, and Asn259. Lys194 serves as the catalytic Proton acceptor. Arg258 is an NADPH binding site. 2 residues coordinate NADPH: Val282 and Glu284.

This sequence belongs to the NAD-dependent glycerol-3-phosphate dehydrogenase family.

The protein resides in the cytoplasm. The enzyme catalyses sn-glycerol 3-phosphate + NAD(+) = dihydroxyacetone phosphate + NADH + H(+). It catalyses the reaction sn-glycerol 3-phosphate + NADP(+) = dihydroxyacetone phosphate + NADPH + H(+). It participates in membrane lipid metabolism; glycerophospholipid metabolism. Catalyzes the reduction of the glycolytic intermediate dihydroxyacetone phosphate (DHAP) to sn-glycerol 3-phosphate (G3P), the key precursor for phospholipid synthesis. The polypeptide is Glycerol-3-phosphate dehydrogenase [NAD(P)+] (Shewanella halifaxensis (strain HAW-EB4)).